The primary structure comprises 124 residues: MATINQLVRKPRKRPVAKSDVPALQSCPQKRGVCTRVYTTTPKKPNSALRKVCRVRLTNGYEVASYIGGEGHNLQEHSVVLIRGGRVKDLPGVRYHTVRGALDTSGVQNRRQGRSKYGTKRPKS.

The tract at residues 1-23 (MATINQLVRKPRKRPVAKSDVPA) is disordered. 3-methylthioaspartic acid is present on aspartate 89. Residues 101–124 (ALDTSGVQNRRQGRSKYGTKRPKS) form a disordered region. The segment covering 111–124 (RQGRSKYGTKRPKS) has biased composition (basic residues).

The protein belongs to the universal ribosomal protein uS12 family. In terms of assembly, part of the 30S ribosomal subunit. Contacts proteins S8 and S17. May interact with IF1 in the 30S initiation complex.

In terms of biological role, with S4 and S5 plays an important role in translational accuracy. Interacts with and stabilizes bases of the 16S rRNA that are involved in tRNA selection in the A site and with the mRNA backbone. Located at the interface of the 30S and 50S subunits, it traverses the body of the 30S subunit contacting proteins on the other side and probably holding the rRNA structure together. The combined cluster of proteins S8, S12 and S17 appears to hold together the shoulder and platform of the 30S subunit. This Chromohalobacter salexigens (strain ATCC BAA-138 / DSM 3043 / CIP 106854 / NCIMB 13768 / 1H11) protein is Small ribosomal subunit protein uS12.